Reading from the N-terminus, the 317-residue chain is Transcription initiation factor IIB 3 (317 aa).

A compositionally biased stretch (basic and acidic residues) spans 1–14 (MERATREREKEQRE). Residues 1–25 (MERATREREKEQREQAQTNDEAQQC) are disordered. The segment at 21-50 (EAQQCPECNSANVITDQSERVCEDCGLVLE) adopts a TFIIB-type zinc-finger fold. Zn(2+) contacts are provided by Cys-25, Cys-28, Cys-42, and Cys-45. Residues 62–83 (AFNSSERDQKSRVGAPTTKTMH) are disordered. 2 repeat units span residues 136–219 (SEID…AQEL) and 230–311 (EYLP…EQIE).

The protein belongs to the TFIIB family.

Its function is as follows. Stabilizes TBP binding to an archaeal box-A promoter. Also responsible for recruiting RNA polymerase II to the pre-initiation complex (DNA-TBP-TFIIB). The chain is Transcription initiation factor IIB 3 from Halobacterium salinarum (strain ATCC 700922 / JCM 11081 / NRC-1) (Halobacterium halobium).